The chain runs to 261 residues: MAEGKEATTSSLSQGLTPHQDPDDAPKSPPNSPNSSTRKACYGVLQSWVSKKFMTGFVVLFPVAVTFLITWWFIQFVDGFFSPIYENLGVDIFGLGFITSVLFTFFVGIFASSWLGSTVFWLGEQFIRRMPFVKHIYSASKQISTAISPDQNTTAFKEVAIIRHPRIGEYAFGFITSSVTLQTDHGEEELCSVYVPTNHLYIGDVFLVSSEEIIRPNLSIREGIEIIVSVGMTMPQVISHVDRTTNRTPHQHSLRVPLNRL.

Residues 1–38 (MAEGKEATTSSLSQGLTPHQDPDDAPKSPPNSPNSSTR) are disordered. At 1 to 56 (MAEGKEATTSSLSQGLTPHQDPDDAPKSPPNSPNSSTRKACYGVLQSWVSKKFMTG) the chain is on the cytoplasmic side. Polar residues predominate over residues 7–17 (ATTSSLSQGLT). Residues 57–77 (FVVLFPVAVTFLITWWFIQFV) traverse the membrane as a helical segment. Residues 78 to 91 (DGFFSPIYENLGVD) lie on the Extracellular side of the membrane. A helical membrane pass occupies residues 92 to 112 (IFGLGFITSVLFTFFVGIFAS). Residues 113 to 261 (SWLGSTVFWL…HSLRVPLNRL (149 aa)) lie on the Cytoplasmic side of the membrane.

Belongs to the plant COV1 protein family.

Its subcellular location is the membrane. The chain is Protein LIKE COV 2 from Arabidopsis thaliana (Mouse-ear cress).